The chain runs to 498 residues: ATP synthase subunit beta, chloroplastic (498 aa).

Glycine 172–threonine 179 is a binding site for ATP.

It belongs to the ATPase alpha/beta chains family. As to quaternary structure, F-type ATPases have 2 components, CF(1) - the catalytic core - and CF(0) - the membrane proton channel. CF(1) has five subunits: alpha(3), beta(3), gamma(1), delta(1), epsilon(1). CF(0) has four main subunits: a(1), b(1), b'(1) and c(9-12).

It localises to the plastid. The protein localises to the chloroplast thylakoid membrane. The enzyme catalyses ATP + H2O + 4 H(+)(in) = ADP + phosphate + 5 H(+)(out). Its function is as follows. Produces ATP from ADP in the presence of a proton gradient across the membrane. The catalytic sites are hosted primarily by the beta subunits. This is ATP synthase subunit beta, chloroplastic from Vitis vinifera (Grape).